Reading from the N-terminus, the 454-residue chain is Probable 1,4-beta-D-glucan cellobiohydrolase C (454 aa).

The first 19 residues, 1-19 (MKHLASSIALTLLLPAVQA), serve as a signal peptide directing secretion. The CBM1 domain maps to 20–55 (QQTVWGQCGGQGWSGPTSCVAGAACSTLNPYYAQCI). Intrachain disulfides connect Cys27/Cys44 and Cys38/Cys54. 2 thr-rich linker regions span residues 59-94 (TATS…PTVT) and 95-454 (ASGN…NPSF). Residues 68 to 95 (TTAATTTSQTTTKPTTTGPTTSAPTVTA) form a disordered region. Asp184 is a catalytic residue. Disulfide bonds link Cys185-Cys244 and Cys376-Cys423. The Proton donor role is filled by Asp230. Asp409 functions as the Nucleophile in the catalytic mechanism. Asn413 carries an N-linked (GlcNAc...) asparagine glycan.

It belongs to the glycosyl hydrolase 6 (cellulase B) family.

The protein resides in the secreted. The enzyme catalyses Hydrolysis of (1-&gt;4)-beta-D-glucosidic linkages in cellulose and cellotetraose, releasing cellobiose from the non-reducing ends of the chains.. Its function is as follows. The biological conversion of cellulose to glucose generally requires three types of hydrolytic enzymes: (1) Endoglucanases which cut internal beta-1,4-glucosidic bonds; (2) Exocellobiohydrolases that cut the disaccharide cellobiose from the non-reducing end of the cellulose polymer chain; (3) Beta-1,4-glucosidases which hydrolyze the cellobiose and other short cello-oligosaccharides to glucose. This Aspergillus fumigatus (strain CBS 144.89 / FGSC A1163 / CEA10) (Neosartorya fumigata) protein is Probable 1,4-beta-D-glucan cellobiohydrolase C (cbhC).